The following is a 750-amino-acid chain: 5-methyltetrahydropteroyltriglutamate--homocysteine methyltransferase (750 aa).

5-methyltetrahydropteroyltri-L-glutamate is bound by residues 15 to 18 (RELK) and Lys114. Residues 425-427 (IGS) and Glu478 each bind L-homocysteine. Residues 425–427 (IGS) and Glu478 contribute to the L-methionine site. A 5-methyltetrahydropteroyltri-L-glutamate-binding site is contributed by Trp555. Asp593 contacts L-homocysteine. Asp593 provides a ligand contact to L-methionine. Glu599 contributes to the 5-methyltetrahydropteroyltri-L-glutamate binding site. Positions 636, 638, and 660 each coordinate Zn(2+). The Proton donor role is filled by His689. Cys721 serves as a coordination point for Zn(2+).

Belongs to the vitamin-B12 independent methionine synthase family. Zn(2+) serves as cofactor.

The catalysed reaction is 5-methyltetrahydropteroyltri-L-glutamate + L-homocysteine = tetrahydropteroyltri-L-glutamate + L-methionine. Its pathway is amino-acid biosynthesis; L-methionine biosynthesis via de novo pathway; L-methionine from L-homocysteine (MetE route): step 1/1. In terms of biological role, catalyzes the transfer of a methyl group from 5-methyltetrahydrofolate to homocysteine resulting in methionine formation. This is 5-methyltetrahydropteroyltriglutamate--homocysteine methyltransferase from Streptococcus gordonii (strain Challis / ATCC 35105 / BCRC 15272 / CH1 / DL1 / V288).